Here is a 68-residue protein sequence, read N- to C-terminus: Dermaseptin-H5 (68 aa).

The signal sequence occupies residues 1–17 (KSLFLVLFLGMVSLSIC). A propeptide spanning residues 18-38 (EEEKRENEDEEKQEDDEQSEM) is cleaved from the precursor. The disordered stretch occupies residues 19–40 (EEKRENEDEEKQEDDEQSEMKR). Acidic residues predominate over residues 25–35 (EDEEKQEDDEQ). Leucine 65 carries the post-translational modification Leucine amide. Residues 67 to 68 (EQ) constitute a propeptide that is removed on maturation.

Expressed by the skin glands.

The protein resides in the secreted. Its function is as follows. Has antibacterial activity against the Gram-negative bacteria E.coli ATCC 11775 (MIC=0.5 uM), and the Gram-positive bacteria S.aureus ATCC 12600 (MIC=0.5 uM) and M.luteus ATCC 49732 (MIC=2.0 uM). Does not inhibit the growth of the fungus C.albicans. Probably acts by disturbing membrane functions with its amphipathic structure. This is Dermaseptin-H5 from Pithecopus azureus (Orange-legged monkey tree frog).